We begin with the raw amino-acid sequence, 728 residues long: Phosphoribosylformylglycinamidine synthase subunit PurL (728 aa).

H40 is a catalytic residue. Residues Y43 and K82 each contribute to the ATP site. Position 84 (E84) interacts with Mg(2+). Residues 85 to 88 and R107 contribute to the substrate site; that span reads SHNH. H86 (proton acceptor) is an active-site residue. D108 is a binding site for Mg(2+). A substrate-binding site is contributed by Q231. D259 is a Mg(2+) binding site. Position 303 to 305 (303 to 305) interacts with substrate; sequence ESQ. ATP contacts are provided by N483 and G520. N521 is a binding site for Mg(2+). S523 is a substrate binding site.

Belongs to the FGAMS family. Monomer. Part of the FGAM synthase complex composed of 1 PurL, 1 PurQ and 2 PurS subunits.

The protein localises to the cytoplasm. It catalyses the reaction N(2)-formyl-N(1)-(5-phospho-beta-D-ribosyl)glycinamide + L-glutamine + ATP + H2O = 2-formamido-N(1)-(5-O-phospho-beta-D-ribosyl)acetamidine + L-glutamate + ADP + phosphate + H(+). It participates in purine metabolism; IMP biosynthesis via de novo pathway; 5-amino-1-(5-phospho-D-ribosyl)imidazole from N(2)-formyl-N(1)-(5-phospho-D-ribosyl)glycinamide: step 1/2. Its function is as follows. Part of the phosphoribosylformylglycinamidine synthase complex involved in the purines biosynthetic pathway. Catalyzes the ATP-dependent conversion of formylglycinamide ribonucleotide (FGAR) and glutamine to yield formylglycinamidine ribonucleotide (FGAM) and glutamate. The FGAM synthase complex is composed of three subunits. PurQ produces an ammonia molecule by converting glutamine to glutamate. PurL transfers the ammonia molecule to FGAR to form FGAM in an ATP-dependent manner. PurS interacts with PurQ and PurL and is thought to assist in the transfer of the ammonia molecule from PurQ to PurL. This chain is Phosphoribosylformylglycinamidine synthase subunit PurL, found in Carboxydothermus hydrogenoformans (strain ATCC BAA-161 / DSM 6008 / Z-2901).